A 161-amino-acid polypeptide reads, in one-letter code: Putative pre-16S rRNA nuclease (161 aa).

The interval Ala-141 to Ala-161 is disordered.

It belongs to the YqgF nuclease family.

The protein resides in the cytoplasm. In terms of biological role, could be a nuclease involved in processing of the 5'-end of pre-16S rRNA. This Clavibacter michiganensis subsp. michiganensis (strain NCPPB 382) protein is Putative pre-16S rRNA nuclease.